The chain runs to 692 residues: Proprotein convertase subtilisin/kexin type 9 (692 aa).

An N-terminal signal peptide occupies residues 1–30; sequence MGTVSSRRSWWPLPLPLLLLLLLGPAGARA. A propeptide spanning residues 31–152 is cleaved from the precursor; it reads QEDEDGDYEE…IEEDSSVFAQ (122 aa). Y38 is subject to Sulfotyrosine. S47 is subject to Phosphoserine. Positions 77 to 149 constitute an Inhibitor I9 domain; that stretch reads TYVVVLKEET…VDYIEEDSSV (73 aa). Residues 155–444 enclose the Peptidase S8 domain; that stretch reads PWNLERITPA…VLTPNLVAAL (290 aa). Residues D186 and H226 each act as charge relay system in the active site. 2 disulfide bridges follow: C223–C255 and C323–C358. S386 (charge relay system) is an active-site residue. Residues 450–692 are C-terminal domain; it reads RAGWQLFCRT…HLVQASQELQ (243 aa). 3 disulfide bridges follow: C457-C527, C477-C526, and C486-C509. An N-linked (GlcNAc...) asparagine glycan is attached at N533. Cystine bridges form between C534/C601, C552/C600, C562/C588, C608/C679, C626/C678, and C635/C654. A Phosphoserine modification is found at S688.

The protein belongs to the peptidase S8 family. In terms of assembly, monomer. Can self-associate to form dimers and higher multimers which may have increased LDLR degrading activity. The precursor protein but not the mature protein may form multimers. Interacts with APOB, VLDLR, LRP8/APOER2 and BACE1. The full-length immature form (pro-PCSK9) interacts with SCNN1A, SCNN1B and SCNN1G. The pro-PCSK9 form (via C-terminal domain) interacts with LDLR. Interacts (via the C-terminal domain) with ANXA2 (via repeat Annexin 1); the interaction inhibits the degradation of LDLR. Requires Ca(2+) as cofactor. In terms of processing, cleavage by furin and PCSK5 generates a truncated inactive protein that is unable to induce LDLR degradation. Post-translationally, undergoes autocatalytic cleavage in the endoplasmic reticulum to release the propeptide from the N-terminus and the cleavage of the propeptide is strictly required for its maturation and activation. The cleaved propeptide however remains associated with the catalytic domain through non-covalent interactions, preventing potential substrates from accessing its active site. As a result, it is secreted from cells as a propeptide-containing, enzymatically inactive protein. Phosphorylation protects the propeptide against proteolysis.

Its subcellular location is the cytoplasm. The protein localises to the secreted. The protein resides in the endosome. It is found in the lysosome. It localises to the cell surface. Its subcellular location is the endoplasmic reticulum. The protein localises to the golgi apparatus. Its proteolytic activity is autoinhibited by the non-covalent binding of the propeptide to the catalytic domain. Inhibited by EGTA. In terms of biological role, crucial player in the regulation of plasma cholesterol homeostasis. Binds to low-density lipid receptor family members: low density lipoprotein receptor (LDLR), very low density lipoprotein receptor (VLDLR), apolipoprotein E receptor (LRP1/APOER) and apolipoprotein receptor 2 (LRP8/APOER2), and promotes their degradation in intracellular acidic compartments. Acts via a non-proteolytic mechanism to enhance the degradation of the hepatic LDLR through a clathrin LDLRAP1/ARH-mediated pathway. May prevent the recycling of LDLR from endosomes to the cell surface or direct it to lysosomes for degradation. Can induce ubiquitination of LDLR leading to its subsequent degradation. Inhibits intracellular degradation of APOB via the autophagosome/lysosome pathway in a LDLR-independent manner. Involved in the disposal of non-acetylated intermediates of BACE1 in the early secretory pathway. Inhibits epithelial Na(+) channel (ENaC)-mediated Na(+) absorption by reducing ENaC surface expression primarily by increasing its proteasomal degradation. Regulates neuronal apoptosis via modulation of LRP8/APOER2 levels and related anti-apoptotic signaling pathways. This Macaca nemestrina (Pig-tailed macaque) protein is Proprotein convertase subtilisin/kexin type 9 (PCSK9).